The chain runs to 155 residues: Deoxyuridine 5'-triphosphate nucleotidohydrolase (155 aa).

Substrate contacts are provided by residues 74–76 (RSG), Asn-87, and 91–93 (LID).

The protein belongs to the dUTPase family. The cofactor is Mg(2+).

It catalyses the reaction dUTP + H2O = dUMP + diphosphate + H(+). It participates in pyrimidine metabolism; dUMP biosynthesis; dUMP from dCTP (dUTP route): step 2/2. This enzyme is involved in nucleotide metabolism: it produces dUMP, the immediate precursor of thymidine nucleotides and it decreases the intracellular concentration of dUTP so that uracil cannot be incorporated into DNA. The sequence is that of Deoxyuridine 5'-triphosphate nucleotidohydrolase from Xylella fastidiosa (strain M12).